The following is a 295-amino-acid chain: Elongation factor Ts (295 aa).

The involved in Mg(2+) ion dislocation from EF-Tu stretch occupies residues 79 to 82; it reads TDFV.

It belongs to the EF-Ts family.

It is found in the cytoplasm. Its function is as follows. Associates with the EF-Tu.GDP complex and induces the exchange of GDP to GTP. It remains bound to the aminoacyl-tRNA.EF-Tu.GTP complex up to the GTP hydrolysis stage on the ribosome. The chain is Elongation factor Ts from Bacillus mycoides (strain KBAB4) (Bacillus weihenstephanensis).